The chain runs to 265 residues: NAD kinase (265 aa).

D45 serves as the catalytic Proton acceptor. Residues 45–46 (DG), 121–122 (NE), R147, D149, 160–165 (TAYSKS), A184, and Q222 contribute to the NAD(+) site.

It belongs to the NAD kinase family. It depends on a divalent metal cation as a cofactor.

It localises to the cytoplasm. The enzyme catalyses NAD(+) + ATP = ADP + NADP(+) + H(+). In terms of biological role, involved in the regulation of the intracellular balance of NAD and NADP, and is a key enzyme in the biosynthesis of NADP. Catalyzes specifically the phosphorylation on 2'-hydroxyl of the adenosine moiety of NAD to yield NADP. In Lacticaseibacillus paracasei (strain ATCC 334 / BCRC 17002 / CCUG 31169 / CIP 107868 / KCTC 3260 / NRRL B-441) (Lactobacillus paracasei), this protein is NAD kinase.